The following is a 442-amino-acid chain: C4-dicarboxylate transport protein (442 aa).

8 consecutive transmembrane segments (helical) span residues 10 to 30, 40 to 60, 77 to 97, 144 to 164, 183 to 203, 221 to 241, 331 to 351, and 354 to 374; these read VQVLIAIALGILTGFLFPSLG, FIKLIKMIIAPIIFATVVSGI, LLYFELVTTFALVIGLVIVNI, FTQGDLLQVLLVAVLFGFALL, VIFVILGFVMRLAPIGAFGAM, LMITFYATCALFIFGVLGLIA, LLGVLLLTSKGAAGVTGSGFI, and AATLSAVGDVPVAGLALILGI. The segment at 418–442 is disordered; sequence LPTIEPDVHSEERGEGRELDSLRPA. A compositionally biased stretch (basic and acidic residues) spans 423-442; sequence PDVHSEERGEGRELDSLRPA.

Belongs to the dicarboxylate/amino acid:cation symporter (DAACS) (TC 2.A.23) family.

It localises to the cell membrane. Its function is as follows. Responsible for the transport of dicarboxylates such as succinate, fumarate, and malate across the membrane. This chain is C4-dicarboxylate transport protein, found in Deinococcus deserti (strain DSM 17065 / CIP 109153 / LMG 22923 / VCD115).